The sequence spans 156 residues: Small ribosomal subunit protein uS7 (156 aa).

Belongs to the universal ribosomal protein uS7 family. In terms of assembly, part of the 30S ribosomal subunit. Contacts proteins S9 and S11.

Its function is as follows. One of the primary rRNA binding proteins, it binds directly to 16S rRNA where it nucleates assembly of the head domain of the 30S subunit. Is located at the subunit interface close to the decoding center, probably blocks exit of the E-site tRNA. This Frankia casuarinae (strain DSM 45818 / CECT 9043 / HFP020203 / CcI3) protein is Small ribosomal subunit protein uS7.